A 263-amino-acid polypeptide reads, in one-letter code: Cysteine-rich repeat secretory protein 55 (263 aa).

Positions 1 to 20 are cleaved as a signal peptide; it reads MKTLVVKCFLLLALVCSCRA. Gnk2-homologous domains lie at 22–126 and 132–240; these read DSIW…QENF and TGAG…FYPF.

Belongs to the cysteine-rich repeat secretory protein family.

Its subcellular location is the secreted. In Arabidopsis thaliana (Mouse-ear cress), this protein is Cysteine-rich repeat secretory protein 55 (CRRSP55).